We begin with the raw amino-acid sequence, 221 residues long: Oxaloacetate tautomerase oaa1, mitochondrial (221 aa).

Residues E59, E61, and D93 each contribute to the Mg(2+) site.

Belongs to the FAH family. Requires Mg(2+) as cofactor. The cofactor is Mn(2+).

It localises to the mitochondrion. The protein resides in the cytoplasm. It carries out the reaction oxaloacetate = enol-oxaloacetate. In terms of biological role, tautomerase that converts enol-oxaloacetate, a strong inhibitor of succinate dehydrogenase, to the physiological keto form of oxaloacetate. The chain is Oxaloacetate tautomerase oaa1, mitochondrial from Schizosaccharomyces pombe (strain 972 / ATCC 24843) (Fission yeast).